A 544-amino-acid chain; its full sequence is Chaperonin GroEL 2 (544 aa).

ATP contacts are provided by residues 29 to 32 (TLGP), 86 to 90 (DGTTT), glycine 413, 482 to 484 (NVL), and aspartate 498.

This sequence belongs to the chaperonin (HSP60) family. Forms a cylinder of 14 subunits composed of two heptameric rings stacked back-to-back. Interacts with the co-chaperonin GroES.

It is found in the cytoplasm. It carries out the reaction ATP + H2O + a folded polypeptide = ADP + phosphate + an unfolded polypeptide.. In terms of biological role, together with its co-chaperonin GroES, plays an essential role in assisting protein folding. The GroEL-GroES system forms a nano-cage that allows encapsulation of the non-native substrate proteins and provides a physical environment optimized to promote and accelerate protein folding. The polypeptide is Chaperonin GroEL 2 (Roseiflexus sp. (strain RS-1)).